Consider the following 410-residue polypeptide: Gamma-glutamyl phosphate reductase (410 aa).

The protein belongs to the gamma-glutamyl phosphate reductase family.

Its subcellular location is the cytoplasm. It carries out the reaction L-glutamate 5-semialdehyde + phosphate + NADP(+) = L-glutamyl 5-phosphate + NADPH + H(+). Its pathway is amino-acid biosynthesis; L-proline biosynthesis; L-glutamate 5-semialdehyde from L-glutamate: step 2/2. Its function is as follows. Catalyzes the NADPH-dependent reduction of L-glutamate 5-phosphate into L-glutamate 5-semialdehyde and phosphate. The product spontaneously undergoes cyclization to form 1-pyrroline-5-carboxylate. This is Gamma-glutamyl phosphate reductase from Campylobacter jejuni subsp. jejuni serotype O:2 (strain ATCC 700819 / NCTC 11168).